Here is a 382-residue protein sequence, read N- to C-terminus: Histidinol-phosphate aminotransferase (382 aa).

Position 215 is an N6-(pyridoxal phosphate)lysine (Lys215). The interval 363 to 382 (NIDNQNKTYSQTSSIRKGTI) is disordered.

It belongs to the class-II pyridoxal-phosphate-dependent aminotransferase family. Histidinol-phosphate aminotransferase subfamily. Homodimer. It depends on pyridoxal 5'-phosphate as a cofactor.

It catalyses the reaction L-histidinol phosphate + 2-oxoglutarate = 3-(imidazol-4-yl)-2-oxopropyl phosphate + L-glutamate. It participates in amino-acid biosynthesis; L-histidine biosynthesis; L-histidine from 5-phospho-alpha-D-ribose 1-diphosphate: step 7/9. This chain is Histidinol-phosphate aminotransferase, found in Yersinia pestis bv. Antiqua (strain Antiqua).